Here is a 767-residue protein sequence, read N- to C-terminus: MITYVFPGQGSQQKGMGQGLFEQYQHLTDQADQILGYSIEKLCTEKSYLDVNHTEYTQPALYVVNALSYLKRVEETGRKPDFAAGHSLGEYNALMAAGAFDFETGLRLVKKRGELMGRITGGGMAAVIGLSKEQVTAVLEEHRLYDIDVANENTPQQIVISGPKKEIEKARAVFENTKDVKLFHPLNVSGAFHSRYMNEAKQVFKQYIDSFQFAPLAIPVISNVYAEPYHQDRLKDTLSEQMDNTVKWTDSIRFLMGRGEMEFAEIGPGTVLTGLIHRIKNEAEPLTYIPKKNPAISAHLKEQRNVQAGITAESLGSAEFKQDYHLTYAYLAGGMYRGIASKEMVVKLSRAGMMGFFGTGGLSLKEVEDAIHAIQGELGKGQAYGINLVHNMKHTESEEKMIDLLLRNQVSIVEASAFLSVTPVLVRYRAKGVKRNQNGDVICSNRLIAKISRPEVAESFLSPAPENMLQKLLGENKITMNEAELLRCIPMADDICVEADSGGHTDGGVAYSLMPAMTSLRDEMMKKYQYRKKIRVGAAGGIGTPEAAMAAFMLGADFILTGSINQCTVEAATSDKVKDLLQQMNVQDTAYAPAGDMFESGSKVQVLKKGVFFPARANKLYELYQRYGSIRELDAKMLAQLEEKYFKRSIEDIYKDIALHYPAADIEKAEQNPKHKMALIFRWYFRYSSKLAISGSEHSKVDYQIHCGPALGAFNQWVKGSQLENWRNRHVDEIGKKLMTETAVLLHERMQSMYQPSHETDNIKIKV.

The acyl transferase stretch occupies residues 1–312 (MITYVFPGQG…QRNVQAGITA (312 aa)). Residues serine 87 and histidine 193 contribute to the active site.

The protein in the N-terminal section; belongs to the FabD family.

It localises to the cytoplasm. The catalysed reaction is holo-[ACP] + malonyl-CoA = malonyl-[ACP] + CoA. The protein operates within antibiotic biosynthesis; bacillaene biosynthesis. Functionally, probably involved in some intermediate steps for the synthesis of the antibiotic polyketide bacillaene which is involved in secondary metabolism. Probably has an acyl transferase activity and could also have a flavin mononucleotide-dependent oxidoreductase activity. The protein is Polyketide biosynthesis protein PksE (pksE) of Bacillus subtilis (strain 168).